An 861-amino-acid chain; its full sequence is DNA mismatch repair protein MutS (861 aa).

618–625 (GPNMGGKS) contacts ATP.

Belongs to the DNA mismatch repair MutS family.

Its function is as follows. This protein is involved in the repair of mismatches in DNA. It is possible that it carries out the mismatch recognition step. This protein has a weak ATPase activity. This is DNA mismatch repair protein MutS from Shewanella sp. (strain MR-4).